We begin with the raw amino-acid sequence, 471 residues long: MEGDDGDFPPEPSEHSLSQRGSVASSVTRAQDLLVYLANDSAVHLTLEGLGCMNAQELGRSVREALNIPNSAADVFAFWFCSPLLELQLKPKHLPYKLCRQWQDLLYRFTEAPTEDISLDEPSLLFKRSVFYPRAKELQIEDEGVLRLLYDEAKMNILEGRYPCDPEHWLTLGALSCAIELGTELDDQALTAAIREKKLSSFLPAHAALGGGGFLSTLRGRGGRNAEMEQNLVKECRSVCSSAASGSSQEPIALLRQYLRSCHNLPYYGCAFFAGEIDKPAQGLLHRGGRKAVSVGISLEGVYVMDVKEKHVLLGLKFTELSWDHSYPETEGDSHILWLEFDGEEAGTPVNKLLKIYSKQAELMSGLIEFCVELRSVSESAATGTDGEVTPSHEPTSPETNNKTRERRQGKLRRQNSVVCSRVHSLSTINYVDDGKEIKRLKPKRAASFFTRQAQPPTYSAVQVTESLEQG.

Disordered regions lie at residues 1–23, 381–416, and 451–471; these read MEGD…RGSV, AATG…RRQN, and TRQA…LEQG. The region spanning 31 to 382 is the FERM domain; that stretch reads QDLLVYLAND…ELRSVSESAA (352 aa).

It is found in the cytoplasm. Its subcellular location is the cytosol. The protein resides in the cell membrane. Functionally, promotes the cell surface stability of rhomboid 5 homologs and prevents their degradation via the endolysosomal pathway. By acting on rhomboid 5 homologs, involved in ADAM17-mediated ligand shedding. Negatively regulates the Wnt/beta-catenin signaling pathway. The polypeptide is FERM domain-containing protein 8 (frmd8) (Danio rerio (Zebrafish)).